Here is a 304-residue protein sequence, read N- to C-terminus: Acetylglutamate kinase (304 aa).

Residues 71 to 72 (GG), Arg-93, and Asn-193 each bind substrate.

It belongs to the acetylglutamate kinase family. ArgB subfamily.

Its subcellular location is the cytoplasm. The enzyme catalyses N-acetyl-L-glutamate + ATP = N-acetyl-L-glutamyl 5-phosphate + ADP. Its pathway is amino-acid biosynthesis; L-arginine biosynthesis; N(2)-acetyl-L-ornithine from L-glutamate: step 2/4. Its function is as follows. Catalyzes the ATP-dependent phosphorylation of N-acetyl-L-glutamate. This chain is Acetylglutamate kinase, found in Streptomyces avermitilis (strain ATCC 31267 / DSM 46492 / JCM 5070 / NBRC 14893 / NCIMB 12804 / NRRL 8165 / MA-4680).